Reading from the N-terminus, the 290-residue chain is Sodium/potassium-transporting ATPase subunit beta-2 (290 aa).

Topologically, residues 1 to 39 (MVIQKEKKSCGQVVEEWKEFVWNPRTHQFMGRTGTSWAF) are cytoplasmic. Residues 40–67 (ILLFYLVFYGFLTAMFSLTMWVMLQTVS) traverse the membrane as a helical; Signal-anchor for type II membrane protein segment. Over 68–290 (DHTPKYQDRL…VAFKLRINKT (223 aa)) the chain is Extracellular. 2 N-linked (GlcNAc...) asparagine glycosylation sites follow: Asn96 and Asn118. A disulfide bridge connects residues Cys129 and Cys150. The N-linked (GlcNAc...) asparagine glycan is linked to Asn153. An intrachain disulfide couples Cys160 to Cys177. N-linked (GlcNAc...) asparagine glycans are attached at residues Asn193, Asn197, Asn220, and Asn238. An immunoglobulin-like region spans residues 193–290 (NQSMNVTCVG…VAFKLRINKT (98 aa)). Cys200 and Cys261 form a disulfide bridge.

It belongs to the X(+)/potassium ATPases subunit beta family. As to quaternary structure, the sodium/potassium-transporting ATPase is composed of a catalytic alpha subunit, an auxiliary non-catalytic beta subunit and an additional regulatory subunit. Interacts with isoform 2 of BSG.

It is found in the cell membrane. Its function is as follows. This is the non-catalytic component of the active enzyme, which catalyzes the hydrolysis of ATP coupled with the exchange of Na(+) and K(+) ions across the plasma membrane. The exact function of the beta-2 subunit is not known. In terms of biological role, mediates cell adhesion of neurons and astrocytes, and promotes neurite outgrowth. The polypeptide is Sodium/potassium-transporting ATPase subunit beta-2 (Atp1b2) (Mus musculus (Mouse)).